The following is a 217-amino-acid chain: External core antigen (217 aa).

A signal peptide spans 1 to 20 (MYLFHLCLVFACVPCPTVQA). The interval 26–28 (GWL) is HBEAG. The tract at residues 166–217 (APILSTLPEHTVIRRRGGSRAARSPRRRTPSPRRRRSQSPRRRRSQSPASNC) is disordered. Residues 178–210 (IRRRGGSRAARSPRRRTPSPRRRRSQSPRRRRS) show a composition bias toward basic residues. The 1; half-length repeat unit spans residues 189 to 195 (SPRRRTP). A 3 X 8 AA repeats of S-P-R-R-R-R-S-Q region spans residues 189-211 (SPRRRTPSPRRRRSQSPRRRRSQ). The propeptide occupies 189–217 (SPRRRTPSPRRRRSQSPRRRRSQSPASNC). Tandem repeats lie at residues 196-203 (SPRRRRSQ) and 204-211 (SPRRRRSQ).

It belongs to the orthohepadnavirus precore antigen family. In terms of assembly, homodimerizes. Phosphorylated. Post-translationally, cleaved by host furin.

It is found in the secreted. The protein localises to the host nucleus. In terms of biological role, may regulate immune response to the intracellular capsid in acting as a T-cell tolerogen, by having an immunoregulatory effect which prevents destruction of infected cells by cytotoxic T-cells. This immune regulation may predispose to chronicity during perinatal infections and prevent severe liver injury during adult infections. The chain is External core antigen from Otospermophilus beecheyi (California ground squirrel).